Here is a 783-residue protein sequence, read N- to C-terminus: Polyribonucleotide nucleotidyltransferase 1, mitochondrial (783 aa).

Residues 1–46 (MAACRYCCSCLRLRPLSDGPFCLPGRDRALTQLLVRALWSSTGSRA) constitute a mitochondrion transit peptide. N6-acetyllysine is present on residues K250, K264, K285, and K289. At K552 the chain carries N6-succinyllysine. Positions 605-664 (PVVETVQVPLSKRAKFVGPGGYNLKKLQAETGVTISQVDEETFSVFAPTPSALHEARDFI) constitute a KH domain. An S1 motif domain is found at 679-750 (GAVYTATITE…ADGRMRLSRK (72 aa)). A phosphoserine mark is found at S754 and S782.

This sequence belongs to the polyribonucleotide nucleotidyltransferase family. Homotrimer; in free form. Homooligomer. Component of the mitochondrial degradosome (mtEXO) complex which is a heteropentamer containing 2 copies of SUPV3L1 and 3 copies of PNPT1. As part of the mitochondrial degradosome complex, interacts with GRSF1 in an RNA-dependent manner; the interaction enhances the activity of the complex. Interacts with TCL1A; the interaction has no effect on PNPT1 exonuclease activity.

The protein resides in the cytoplasm. Its subcellular location is the mitochondrion matrix. It is found in the mitochondrion intermembrane space. It carries out the reaction RNA(n+1) + phosphate = RNA(n) + a ribonucleoside 5'-diphosphate. Functionally, RNA-binding protein implicated in numerous RNA metabolic processes. Catalyzes the phosphorolysis of single-stranded polyribonucleotides processively in the 3'-to-5' direction. Mitochondrial intermembrane factor with RNA-processing exoribonulease activity. Component of the mitochondrial degradosome (mtEXO) complex, that degrades 3' overhang double-stranded RNA with a 3'-to-5' directionality in an ATP-dependent manner. Involved in the degradation of non-coding mitochondrial transcripts (MT-ncRNA) and tRNA-like molecules. Required for correct processing and polyadenylation of mitochondrial mRNAs. Plays a role as a cytoplasmic RNA import factor that mediates the translocation of small RNA components like the 5S RNA, the RNA subunit of ribonuclease P and the mitochondrial RNA-processing (MRP) RNA, into the mitochondrial matrix. Plays a role in mitochondrial morphogenesis and respiration; regulates the expression of the electron transport chain (ETC) components at the mRNA and protein levels. In the cytoplasm, shows a 3'-to-5' exoribonuclease mediating mRNA degradation activity; degrades c-myc mRNA upon treatment with IFNB1/IFN-beta, resulting in a growth arrest in melanoma cells. Regulates the stability of specific mature miRNAs in melanoma cells; specifically and selectively degrades miR-221, preferentially. Also plays a role in RNA cell surveillance by cleaning up oxidized RNAs. Binds to the RNA subunit of ribonuclease P, MRP RNA and miR-221 microRNA. The chain is Polyribonucleotide nucleotidyltransferase 1, mitochondrial (PNPT1) from Pongo abelii (Sumatran orangutan).